Here is a 111-residue protein sequence, read N- to C-terminus: Nucleoid-associated protein Cphamn1_1179 (111 aa).

Belongs to the YbaB/EbfC family. In terms of assembly, homodimer.

It localises to the cytoplasm. The protein localises to the nucleoid. In terms of biological role, binds to DNA and alters its conformation. May be involved in regulation of gene expression, nucleoid organization and DNA protection. The sequence is that of Nucleoid-associated protein Cphamn1_1179 from Chlorobium phaeobacteroides (strain BS1).